Consider the following 78-residue polypeptide: Defensin beta 136 (78 aa).

Residues 1-21 form the signal peptide; it reads MNLCLSALLFFLVILLPSGKG. 3 cysteine pairs are disulfide-bonded: Cys33/Cys60, Cys40/Cys54, and Cys44/Cys61.

It belongs to the beta-defensin family.

Its subcellular location is the secreted. Host defense peptide that exhibits antibacterial and antifungal activity. Exhibits antimicrobial activity against E.coli, S.aureus and C.albicans (in vitro). Has high lipopolysaccharide (LPS)-binding affinity, and may thereby be involved in immunoregulation through LPS neutralization. This is Defensin beta 136 (DEFB136) from Homo sapiens (Human).